Reading from the N-terminus, the 436-residue chain is Adenylosuccinate synthetase (436 aa).

GTP-binding positions include 12 to 18 (GDEGKGK) and 40 to 42 (GHT). Asp-13 (proton acceptor) is an active-site residue. Mg(2+)-binding residues include Asp-13 and Gly-40. Residues 13–16 (DEGK), 38–41 (NAGH), Thr-128, Arg-142, Gln-223, Thr-238, and Arg-302 contribute to the IMP site. His-41 (proton donor) is an active-site residue. A substrate-binding site is contributed by 298–304 (TTTGRRR). GTP-binding positions include Arg-304, 330–332 (KLD), and 412–414 (SLG).

It belongs to the adenylosuccinate synthetase family. As to quaternary structure, homodimer. Mg(2+) serves as cofactor.

The protein localises to the cytoplasm. It carries out the reaction IMP + L-aspartate + GTP = N(6)-(1,2-dicarboxyethyl)-AMP + GDP + phosphate + 2 H(+). It functions in the pathway purine metabolism; AMP biosynthesis via de novo pathway; AMP from IMP: step 1/2. Functionally, plays an important role in the de novo pathway of purine nucleotide biosynthesis. Catalyzes the first committed step in the biosynthesis of AMP from IMP. In Prochlorococcus marinus (strain MIT 9215), this protein is Adenylosuccinate synthetase.